Consider the following 234-residue polypeptide: Enolase-phosphatase E1 (234 aa).

2 residues coordinate Mg(2+): aspartate 10 and glutamate 12. Substrate contacts are provided by residues 125–126 (SS) and lysine 162. Residue aspartate 188 participates in Mg(2+) binding.

The protein belongs to the HAD-like hydrolase superfamily. MasA/MtnC family. In terms of assembly, monomer. The cofactor is Mg(2+).

Its subcellular location is the cytoplasm. It localises to the nucleus. The enzyme catalyses 5-methylsulfanyl-2,3-dioxopentyl phosphate + H2O = 1,2-dihydroxy-5-(methylsulfanyl)pent-1-en-3-one + phosphate. It participates in amino-acid biosynthesis; L-methionine biosynthesis via salvage pathway; L-methionine from S-methyl-5-thio-alpha-D-ribose 1-phosphate: step 3/6. It functions in the pathway amino-acid biosynthesis; L-methionine biosynthesis via salvage pathway; L-methionine from S-methyl-5-thio-alpha-D-ribose 1-phosphate: step 4/6. Its function is as follows. Bifunctional enzyme that catalyzes the enolization of 2,3-diketo-5-methylthiopentyl-1-phosphate (DK-MTP-1-P) into the intermediate 2-hydroxy-3-keto-5-methylthiopentenyl-1-phosphate (HK-MTPenyl-1-P), which is then dephosphorylated to form the acireductone 1,2-dihydroxy-3-keto-5-methylthiopentene (DHK-MTPene). The polypeptide is Enolase-phosphatase E1 (Sordaria macrospora (strain ATCC MYA-333 / DSM 997 / K(L3346) / K-hell)).